The following is a 485-amino-acid chain: Glutamyl-tRNA(Gln) amidotransferase subunit A (485 aa).

Residues Lys78 and Ser153 each act as charge relay system in the active site. Catalysis depends on Ser177, which acts as the Acyl-ester intermediate.

The protein belongs to the amidase family. GatA subfamily. As to quaternary structure, heterotrimer of A, B and C subunits.

It carries out the reaction L-glutamyl-tRNA(Gln) + L-glutamine + ATP + H2O = L-glutaminyl-tRNA(Gln) + L-glutamate + ADP + phosphate + H(+). In terms of biological role, allows the formation of correctly charged Gln-tRNA(Gln) through the transamidation of misacylated Glu-tRNA(Gln) in organisms which lack glutaminyl-tRNA synthetase. The reaction takes place in the presence of glutamine and ATP through an activated gamma-phospho-Glu-tRNA(Gln). The sequence is that of Glutamyl-tRNA(Gln) amidotransferase subunit A from Bacillus cereus (strain ATCC 14579 / DSM 31 / CCUG 7414 / JCM 2152 / NBRC 15305 / NCIMB 9373 / NCTC 2599 / NRRL B-3711).